Here is a 130-residue protein sequence, read N- to C-terminus: Small ribosomal subunit protein uS8 (130 aa).

This sequence belongs to the universal ribosomal protein uS8 family. As to quaternary structure, part of the 30S ribosomal subunit. Contacts proteins S5 and S12.

One of the primary rRNA binding proteins, it binds directly to 16S rRNA central domain where it helps coordinate assembly of the platform of the 30S subunit. In Haemophilus influenzae (strain 86-028NP), this protein is Small ribosomal subunit protein uS8.